We begin with the raw amino-acid sequence, 228 residues long: Calcyclin-binding protein (228 aa).

Met-1 is subject to N-acetylmethionine. Residue Ala-2 is modified to N-acetylalanine. The segment at 2 to 80 is interaction with SIAH1; that stretch reads ASEELQKDLE…YTVKISNYGW (79 aa). The residue at position 3 (Ser-3) is a Phosphoserine. Residues Lys-8 and Lys-19 each carry the N6-acetyllysine modification. A Phosphoserine modification is found at Ser-34. The region spanning 73–167 is the CS domain; that stretch reads VKISNYGWDQ…VENTRWDYLT (95 aa). The interval 73–228 is interaction with SKP1; that stretch reads VKISNYGWDQ…EKQAKGDTEF (156 aa). Residues Lys-85 and Lys-118 each carry the N6-acetyllysine modification. Positions 154–228 are interaction with S100A6; that stretch reads CRKKVENTRW…EKQAKGDTEF (75 aa). Residues 168–228 enclose the SGS domain; that stretch reads QVEKECKEKE…EKQAKGDTEF (61 aa).

As to quaternary structure, homodimer. Interacts with proteins of the S100 family S100A1, S100A6, S100B, S100P and S100A12 in a calcium-dependent manner. Component of some large E3 complex at least composed of UBE2D1, SIAH1, CACYBP/SIP, SKP1, APC and TBL1X. Interacts directly with SIAH1, SIAH2 and SKP1. Post-translationally, phosphorylated on serine residues. Phosphorylated upon induction by RA or at high calcium concentrations.

The protein resides in the nucleus. It is found in the cytoplasm. Functionally, may be involved in calcium-dependent ubiquitination and subsequent proteasomal degradation of target proteins. Probably serves as a molecular bridge in ubiquitin E3 complexes. Participates in the ubiquitin-mediated degradation of beta-catenin (CTNNB1). The protein is Calcyclin-binding protein (CACYBP) of Homo sapiens (Human).